The following is a 312-amino-acid chain: DNA-directed RNA polymerase subunit alpha (312 aa).

The interval 1–226 (MIEFEKPKIT…DHLNLFVDLS (226 aa)) is alpha N-terminal domain (alpha-NTD). Residues 243-312 (TERVLDKIIE…ELGLSLKKRK (70 aa)) are alpha C-terminal domain (alpha-CTD).

Belongs to the RNA polymerase alpha chain family. In terms of assembly, homodimer. The RNAP catalytic core consists of 2 alpha, 1 beta, 1 beta' and 1 omega subunit. When a sigma factor is associated with the core the holoenzyme is formed, which can initiate transcription.

It carries out the reaction RNA(n) + a ribonucleoside 5'-triphosphate = RNA(n+1) + diphosphate. Its function is as follows. DNA-dependent RNA polymerase catalyzes the transcription of DNA into RNA using the four ribonucleoside triphosphates as substrates. The chain is DNA-directed RNA polymerase subunit alpha from Lactococcus lactis subsp. cremoris (strain MG1363).